Reading from the N-terminus, the 180-residue chain is Riboflavin kinase (180 aa).

Residues T40 and N42 each coordinate Mg(2+). E117 acts as the Nucleophile in catalysis.

This sequence belongs to the flavokinase family. It depends on Zn(2+) as a cofactor. The cofactor is Mg(2+).

The catalysed reaction is riboflavin + ATP = FMN + ADP + H(+). The protein operates within cofactor biosynthesis; FMN biosynthesis; FMN from riboflavin (ATP route): step 1/1. In terms of biological role, catalyzes the phosphorylation of riboflavin (vitamin B2) to form flavin mononucleotide (FMN) coenzyme. The polypeptide is Riboflavin kinase (FMN1) (Meyerozyma guilliermondii (strain ATCC 6260 / CBS 566 / DSM 6381 / JCM 1539 / NBRC 10279 / NRRL Y-324) (Yeast)).